The sequence spans 147 residues: D-aminoacyl-tRNA deacylase (147 aa).

The Gly-cisPro motif, important for rejection of L-amino acids motif lies at 136-137; the sequence is GP.

This sequence belongs to the DTD family. In terms of assembly, homodimer.

The protein resides in the cytoplasm. It carries out the reaction glycyl-tRNA(Ala) + H2O = tRNA(Ala) + glycine + H(+). The catalysed reaction is a D-aminoacyl-tRNA + H2O = a tRNA + a D-alpha-amino acid + H(+). In terms of biological role, an aminoacyl-tRNA editing enzyme that deacylates mischarged D-aminoacyl-tRNAs. Also deacylates mischarged glycyl-tRNA(Ala), protecting cells against glycine mischarging by AlaRS. Acts via tRNA-based rather than protein-based catalysis; rejects L-amino acids rather than detecting D-amino acids in the active site. By recycling D-aminoacyl-tRNA to D-amino acids and free tRNA molecules, this enzyme counteracts the toxicity associated with the formation of D-aminoacyl-tRNA entities in vivo and helps enforce protein L-homochirality. The protein is D-aminoacyl-tRNA deacylase of Streptococcus equi subsp. zooepidemicus (strain MGCS10565).